Reading from the N-terminus, the 431-residue chain is Fibrinogen C domain-containing protein 1 (431 aa).

At 1–3 the chain is on the cytoplasmic side; that stretch reads MLC. A helical; Signal-anchor for type II membrane protein transmembrane segment spans residues 4-24; that stretch reads TVLLALAVLLAVAVTGAVLFL. Over 25–431 the chain is Extracellular; sequence NHTHTPGTAP…MKIRPVREDR (407 aa). The region spanning 205–428 is the Fibrinogen C-terminal domain; it reads CATGSRPRDC…FSEMKIRPVR (224 aa). A disulfide bridge links Cys-214 with Cys-243. N-linked (GlcNAc...) asparagine glycosylation is present at Asn-310. Positions 363 and 365 each coordinate Ca(2+). Cys-371 and Cys-384 are disulfide-bonded.

In terms of assembly, homotetramer; disulfide-linked.

The protein localises to the membrane. In terms of biological role, acetyl group-binding receptor which shows a high-affinity and calcium-dependent binding to acetylated structures such as chitin, some N-acetylated carbohydrates, and amino acids, but not to their non-acetylated counterparts. Can facilitate the endocytosis of acetylated components. The protein is Fibrinogen C domain-containing protein 1 (FIBCD1) of Macaca fascicularis (Crab-eating macaque).